The sequence spans 107 residues: ATP synthase subunit c (107 aa).

3 consecutive transmembrane segments (helical) span residues 4-24 (IVFLMLALSGFAFAAEGSMNQ), 29-49 (FSILAAGLGLGVAALGGAIGM), and 74-94 (MFIALAMIEAQVIYALVIALI).

The protein belongs to the ATPase C chain family. In terms of assembly, F-type ATPases have 2 components, F(1) - the catalytic core - and F(0) - the membrane proton channel. F(1) has five subunits: alpha(3), beta(3), gamma(1), delta(1), epsilon(1). F(0) has three main subunits: a(1), b(2) and c(10-14). The alpha and beta chains form an alternating ring which encloses part of the gamma chain. F(1) is attached to F(0) by a central stalk formed by the gamma and epsilon chains, while a peripheral stalk is formed by the delta and b chains.

The protein localises to the cell inner membrane. Its function is as follows. F(1)F(0) ATP synthase produces ATP from ADP in the presence of a proton or sodium gradient. F-type ATPases consist of two structural domains, F(1) containing the extramembraneous catalytic core and F(0) containing the membrane proton channel, linked together by a central stalk and a peripheral stalk. During catalysis, ATP synthesis in the catalytic domain of F(1) is coupled via a rotary mechanism of the central stalk subunits to proton translocation. In terms of biological role, key component of the F(0) channel; it plays a direct role in translocation across the membrane. A homomeric c-ring of between 10-14 subunits forms the central stalk rotor element with the F(1) delta and epsilon subunits. In Campylobacter lari (strain RM2100 / D67 / ATCC BAA-1060), this protein is ATP synthase subunit c.